Reading from the N-terminus, the 562-residue chain is DNA ligase (562 aa).

Residue Glu-250 participates in ATP binding. Lys-252 serves as the catalytic N6-AMP-lysine intermediate. ATP is bound by residues Arg-257, Arg-272, Glu-302, Phe-342, Arg-417, and Lys-423.

It belongs to the ATP-dependent DNA ligase family. It depends on Mg(2+) as a cofactor. Zn(2+) serves as cofactor.

The enzyme catalyses ATP + (deoxyribonucleotide)n-3'-hydroxyl + 5'-phospho-(deoxyribonucleotide)m = (deoxyribonucleotide)n+m + AMP + diphosphate.. It catalyses the reaction NAD(+) + (deoxyribonucleotide)n-3'-hydroxyl + 5'-phospho-(deoxyribonucleotide)m = (deoxyribonucleotide)n+m + AMP + beta-nicotinamide D-nucleotide.. DNA ligase that seals nicks in double-stranded DNA during DNA replication, DNA recombination and DNA repair. Can use both ATP and NAD(+), but NAD(+) may be a preferred nucleotide cofactor. The protein is DNA ligase of Thermococcus onnurineus (strain NA1).